The chain runs to 463 residues: Pentatricopeptide repeat-containing protein At2g17670 (463 aa).

The disordered stretch occupies residues 1–63 (MGKVPSSFRS…PSLRNPFKSP (63 aa)). PPR repeat units follow at residues 121 to 157 (GRSTFLILLSHACRAPDSSISNVHRVLNLMVNNGLEP), 158 to 192 (DQVTTDIAVRSLCETGRVDEAKDLMKELTEKHSPP), 193 to 223 (DTYTYNFLLKHLCKCKDLHVVYEFVDEMRDD), 229 to 263 (DLVSFTILIDNVCNSKNLREAMYLVSKLGNAGFKP), 264 to 298 (DCFLYNTIMKGFCTLSKGSEAVGVYKKMKEEGVEP), 299 to 333 (DQITYNTLIFGLSKAGRVEEARMYLKTMVDAGYEP), 334 to 368 (DTATYTSLMNGMCRKGESLGALSLLEEMEARGCAP), 369 to 403 (NDCTYNTLLHGLCKARLMDKGMELYEMMKSSGVKL), and 404 to 438 (ESNGYATLVRSLVKSGKVAEAYEVFDYAVDSKSLS).

Belongs to the PPR family. P subfamily.

This chain is Pentatricopeptide repeat-containing protein At2g17670, found in Arabidopsis thaliana (Mouse-ear cress).